The chain runs to 350 residues: MDFLRNLFTQTLGLGSQKERLLDELTLEGVTRYMQSERCRRVICLVGAGISTSAGIPDFRSPSTGLYANLEKYHLPYPEAIFEISYFKKHPEPFFALAKELYPGQFKPTICHYFIRLLKEKGLLLRCYTQNIDTLERVAGLEPQDLVEAHGTFYTSHCVNTSCGKEYTMSWMKEKIFSEATPKCEKCQNVVKPDIVFFGENLPPRFFSCMQSDFSKVDLLIIMGTSLQVQPFASLISKAPLATPRLLINKEKTGQTDPFLGMMMGLGGGMDFDSKKAYRDVAWLGDCDQGCLALADLLGWKELEDLVRREHANIDAQSGSQASNPSATVSPRKSPPPAKEAARTKEKEEH.

Residues 4–14 (LRNLFTQTLGL) carry the Nuclear export signal motif. Ser16 is modified (phosphoserine). The region spanning 20–301 (RLLDELTLEG…LALADLLGWK (282 aa)) is the Deacetylase sirtuin-type domain. Residues 48 to 52 (AGIST) and 58 to 60 (DFR) contribute to the NAD(+) site. A Phosphoserine modification is found at Ser63. Residue 130-133 (QNID) coordinates NAD(+). His150 acts as the Proton acceptor in catalysis. Zn(2+)-binding residues include Cys158 and Cys163. The residue at position 170 (Ser170) is a Phosphoserine. The Zn(2+) site is built by Cys184 and Cys187. Residues 225–226 (TS), 249–251 (NKE), and Cys287 contribute to the NAD(+) site. The tract at residues 312–350 (ANIDAQSGSQASNPSATVSPRKSPPPAKEAARTKEKEEH) is disordered. Over residues 315–331 (DAQSGSQASNPSATVSP) the composition is skewed to polar residues. Phosphoserine occurs at positions 330 and 334. A compositionally biased stretch (basic and acidic residues) spans 340–350 (EAARTKEKEEH).

Belongs to the sirtuin family. Class I subfamily. In terms of assembly, interacts with CDC20, FOXO3 and FZR1. Associates with microtubules in primary cortical mature neurons. Homotrimer. Interacts (via both phosphorylated, unphosphorylated, active or inactive forms) with HDAC6; the interaction is necessary for the complex to interact with alpha-tubulin, suggesting that these proteins belong to a large complex that deacetylates the cytoskeleton. Interacts with FOXO1; the interaction is disrupted upon serum-starvation or oxidative stress, leading to increased level of acetylated FOXO1 and induction of autophagy. Interacts with RELA; the interaction occurs in the cytoplasm and is increased in a TNF-alpha-dependent manner. Interacts with HOXA10; the interaction is direct. Interacts with YWHAB and YWHAG; the interactions occur in a AKT-dependent manner and increase SIRT2-dependent TP53 deacetylation. Interacts with MAPK1/ERK2 and MAPK3/ERK1; the interactions increase SIRT2 stability and deacetylation activity. Interacts (phosphorylated form) with KMT5A isoform 2; the interaction is direct, stimulates KMT5A-mediated methyltransferase activity on histone at 'Lys-20' (H4K20me1) and is increased in a H(2)O(2)-induced oxidative stress-dependent manner. Interacts with G6PD; the interaction is enhanced by H(2)O(2) treatment. Interacts with a G1/S-specific cyclin E-CDK2 complex. Interacts with AURKA, CDK5R1 (p35 form) and CDK5 and HIF1A. Interacts with the tRNA ligase SARS1; recruited to the VEGFA promoter via interaction with SARS1. Interacts with BEX4; negatively regulates alpha-tubulin deacetylation by SIRT2. Zn(2+) is required as a cofactor. Phosphorylated at phosphoserine and phosphothreonine. Phosphorylated at Ser-330 by a mitotic kinase CDK1/cyclin B at the G2/M transition; phosphorylation regulates the delay in cell-cycle progression. Phosphorylated at Ser-330 by a mitotic kinase G1/S-specific cyclin E/Cdk2 complex; phosphorylation inactivates SIRT2-mediated alpha-tubulin deacetylation and thereby negatively regulates cell adhesion, cell migration and neurite outgrowth during neuronal differentiation. Phosphorylated by cyclin A/Cdk2 and p35-Cdk5 complexes and to a lesser extent by the cyclin D3/Cdk4 and cyclin B/Cdk1, in vitro. Dephosphorylated at Ser-330 by CDC14A and CDC14B around early anaphase. In terms of processing, acetylated by EP300; acetylation leads both to the decreased of SIRT2-mediated alpha-tubulin deacetylase activity and SIRT2-mediated down-regulation of TP53 transcriptional activity. Post-translationally, ubiquitinated. In terms of tissue distribution, expressed in the cerebellum, cerebral cortex and cervival spinal cord. Expressed in Purkinje cells, oligodendrocytes and Schwann cells (at protein level). Expressed in the central nervous system (CNS).

It localises to the nucleus. Its subcellular location is the cytoplasm. It is found in the perinuclear region. The protein localises to the cytoskeleton. The protein resides in the microtubule organizing center. It localises to the centrosome. Its subcellular location is the centriole. It is found in the spindle. The protein localises to the midbody. The protein resides in the chromosome. It localises to the perikaryon. Its subcellular location is the cell projection. It is found in the growth cone. The protein localises to the myelin membrane. The catalysed reaction is N(6)-acetyl-L-lysyl-[protein] + NAD(+) + H2O = 2''-O-acetyl-ADP-D-ribose + nicotinamide + L-lysyl-[protein]. It carries out the reaction N(6)-tetradecanoyl-L-lysyl-[protein] + NAD(+) + H2O = 2''-O-tetradecanoyl-ADP-D-ribose + nicotinamide + L-lysyl-[protein]. It catalyses the reaction N(6)-hexadecanoyl-L-lysyl-[protein] + NAD(+) + H2O = 2''-O-hexadecanoyl-ADP-D-ribose + nicotinamide + L-lysyl-[protein]. Its activity is regulated as follows. Inhibited by Sirtinol, A3 and M15 small molecules. Inhibited by nicotinamide. Inhibited by a macrocyclic peptide inhibitor S2iL5. Inhibited by EP300-induced acetylation. NAD-dependent protein deacetylase, which deacetylates internal lysines on histone and alpha-tubulin as well as many other proteins such as key transcription factors. Participates in the modulation of multiple and diverse biological processes such as cell cycle control, genomic integrity, microtubule dynamics, cell differentiation, metabolic networks, and autophagy. Plays a major role in the control of cell cycle progression and genomic stability. Functions in the antephase checkpoint preventing precocious mitotic entry in response to microtubule stress agents, and hence allowing proper inheritance of chromosomes. Positively regulates the anaphase promoting complex/cyclosome (APC/C) ubiquitin ligase complex activity by deacetylating CDC20 and FZR1, then allowing progression through mitosis. Associates both with chromatin at transcriptional start sites (TSSs) and enhancers of active genes. Plays a role in cell cycle and chromatin compaction through epigenetic modulation of the regulation of histone H4 'Lys-20' methylation (H4K20me1) during early mitosis. Specifically deacetylates histone H4 at 'Lys-16' (H4K16ac) between the G2/M transition and metaphase enabling H4K20me1 deposition by KMT5A leading to ulterior levels of H4K20me2 and H4K20me3 deposition throughout cell cycle, and mitotic S-phase progression. Deacetylates KMT5A modulating KMT5A chromatin localization during the mitotic stress response. Also deacetylates histone H3 at 'Lys-57' (H3K56ac) during the mitotic G2/M transition. During oocyte meiosis progression, may deacetylate histone H4 at 'Lys-16' (H4K16ac) and alpha-tubulin, regulating spindle assembly and chromosome alignment by influencing microtubule dynamics and kinetochore function. Deacetylates histone H4 at 'Lys-16' (H4K16ac) at the VEGFA promoter and thereby contributes to regulate expression of VEGFA, a key regulator of angiogenesis. Deacetylates alpha-tubulin at 'Lys-40' and hence controls neuronal motility, oligodendroglial cell arbor projection processes and proliferation of non-neuronal cells. Phosphorylation at Ser-368 by a G1/S-specific cyclin E-CDK2 complex inactivates SIRT2-mediated alpha-tubulin deacetylation, negatively regulating cell adhesion, cell migration and neurite outgrowth during neuronal differentiation. Deacetylates PARD3 and participates in the regulation of Schwann cell peripheral myelination formation during early postnatal development and during postinjury remyelination. Involved in several cellular metabolic pathways. Plays a role in the regulation of blood glucose homeostasis by deacetylating and stabilizing phosphoenolpyruvate carboxykinase PCK1 activity in response to low nutrient availability. Acts as a key regulator in the pentose phosphate pathway (PPP) by deacetylating and activating the glucose-6-phosphate G6PD enzyme, and therefore, stimulates the production of cytosolic NADPH to counteract oxidative damage. Maintains energy homeostasis in response to nutrient deprivation as well as energy expenditure by inhibiting adipogenesis and promoting lipolysis. Attenuates adipocyte differentiation by deacetylating and promoting FOXO1 interaction to PPARG and subsequent repression of PPARG-dependent transcriptional activity. Plays a role in the regulation of lysosome-mediated degradation of protein aggregates by autophagy in neuronal cells. Deacetylates FOXO1 in response to oxidative stress or serum deprivation, thereby negatively regulating FOXO1-mediated autophagy. Deacetylates a broad range of transcription factors and co-regulators regulating target gene expression. Deacetylates transcriptional factor FOXO3 stimulating the ubiquitin ligase SCF(SKP2)-mediated FOXO3 ubiquitination and degradation. Deacetylates HIF1A and therefore promotes HIF1A degradation and inhibition of HIF1A transcriptional activity in tumor cells in response to hypoxia. Deacetylates RELA in the cytoplasm inhibiting NF-kappaB-dependent transcription activation upon TNF-alpha stimulation. Inhibits transcriptional activation by deacetylating p53/TP53 and EP300. Also deacetylates EIF5A. Functions as a negative regulator on oxidative stress-tolerance in response to anoxia-reoxygenation conditions. Plays a role as tumor suppressor. In addition to protein deacetylase activity, also has activity toward long-chain fatty acyl groups and mediates protein-lysine demyristoylation and depalmitoylation of target proteins, such as ARF6 and KRAS, thereby regulating their association with membranes. This chain is NAD-dependent protein deacetylase sirtuin-2 (Sirt2), found in Rattus norvegicus (Rat).